Here is a 294-residue protein sequence, read N- to C-terminus: 4-hydroxy-tetrahydrodipicolinate synthase (294 aa).

Thr-47 serves as a coordination point for pyruvate. Tyr-135 acts as the Proton donor/acceptor in catalysis. Lys-163 acts as the Schiff-base intermediate with substrate in catalysis. Thr-205 provides a ligand contact to pyruvate.

Belongs to the DapA family. Homotetramer; dimer of dimers.

It localises to the cytoplasm. The catalysed reaction is L-aspartate 4-semialdehyde + pyruvate = (2S,4S)-4-hydroxy-2,3,4,5-tetrahydrodipicolinate + H2O + H(+). It participates in amino-acid biosynthesis; L-lysine biosynthesis via DAP pathway; (S)-tetrahydrodipicolinate from L-aspartate: step 3/4. Catalyzes the condensation of (S)-aspartate-beta-semialdehyde [(S)-ASA] and pyruvate to 4-hydroxy-tetrahydrodipicolinate (HTPA). In Rickettsia africae (strain ESF-5), this protein is 4-hydroxy-tetrahydrodipicolinate synthase.